We begin with the raw amino-acid sequence, 343 residues long: Ribosomal RNA small subunit methyltransferase C (343 aa).

Belongs to the methyltransferase superfamily. RsmC family. Monomer.

The protein localises to the cytoplasm. It catalyses the reaction guanosine(1207) in 16S rRNA + S-adenosyl-L-methionine = N(2)-methylguanosine(1207) in 16S rRNA + S-adenosyl-L-homocysteine + H(+). Functionally, specifically methylates the guanine in position 1207 of 16S rRNA in the 30S particle. In Escherichia coli O6:K15:H31 (strain 536 / UPEC), this protein is Ribosomal RNA small subunit methyltransferase C.